We begin with the raw amino-acid sequence, 20 residues long: Non-specific lipid-transfer protein (20 aa).

This sequence belongs to the plant LTP family. In terms of tissue distribution, leaf.

Functionally, plant non-specific lipid-transfer proteins transfer phospholipids as well as galactolipids across membranes. May play a role in wax or cutin deposition in the cell walls of expanding epidermal cells and certain secretory tissues. The sequence is that of Non-specific lipid-transfer protein from Cannabis sativa (Hemp).